The primary structure comprises 496 residues: Protein RepR (496 aa).

A DNA-binding region spans residues 120–141; that stretch reads SDILTTAIDLGFMPTLIIKSDK.

Its function is as follows. Essential for replication. In Streptococcus agalactiae, this protein is Protein RepR (repR).